We begin with the raw amino-acid sequence, 466 residues long: METAERISAAASAASSRRAKRLAQQAHKTHPVIQAKQNQMYLITTLSPAQVDNSLINRVLPKEVLLKVFSFLDTKALCRSAQVCRSWSILALDGSNWQRVDLFTFQRDVKTAVVENLARRCGGFLKELSLKGCENVHDSALRTFTSRCPNLEHLSLYRCKRVTDASCENLGRYCHKLNYLNLENCSSITDRAMKYIGDGCPNLSYLNISWCDAIQDRGVQIILSNCKSLDTLILRGCEGLTENVFGSVEAHMGAIKKLNLLQCFQLTDITVQNIANGATALEYLCMSNCNQISDRSLVSLGQHSHNLKVLELSGCTLLGDNGFIPLARGCRQLERLDMEDCSLISDHTINSLANNCTALRELSLSHCELITDESIQNLASKHRETLNVLELDNCPQLTDSTLSHLRHCKALKRIDLYDCQNVSKEAIVRFQHHRPNIEIHAYFAPVTPPTDQVVNRGGICRCCVIL.

In terms of domain architecture, F-box spans 54-100; it reads SLINRVLPKEVLLKVFSFLDTKALCRSAQVCRSWSILALDGSNWQRV. LRR repeat units follow at residues 122–147, 148–173, 174–199, 200–225, 226–251, 252–277, 278–303, 304–329, 330–355, 356–381, and 408–433; these read GGFL…FTSR, CPNL…LGRY, CHKL…IGDG, CPNL…ILSN, CKSL…VEAH, MGAI…IANG, ATAL…LGQH, SHNL…LARG, CRQL…LANN, CTAL…LASK, and CKAL…FQHH.

As to quaternary structure, component of the SCF (SKP1-CUL1-F-box protein)-type E3 ubiquitin ligase complex. Expressed in neuroglial cells such as the socket cell and sheath cell, neurosecretory motor neurons and regions around the pharynx and anus.

It is found in the perikaryon. The protein localises to the cell projection. It localises to the dendrite. The protein resides in the cilium. Its subcellular location is the axon. Its function is as follows. Substrate-recognition component of the SCF (SKP1-CUL1-F-box protein)-type E3 ubiquitin ligase complex. Plays a role in regulating the entry into the dauer state. In hermaphrodites, may play a role in modulating the rate of defecation. The polypeptide is F-box/LRR-repeat protein fbxl-1 (Caenorhabditis elegans).